Reading from the N-terminus, the 131-residue chain is uncharacterized protein (131 aa).

A coiled-coil region spans residues Gln4–Asn44.

This is an uncharacterized protein from Sulfolobus islandicus filamentous virus (isolate Iceland/Hveragerdi) (SIFV).